We begin with the raw amino-acid sequence, 341 residues long: Eukaryotic translation initiation factor 2 subunit 1 (341 aa).

One can recognise an S1 motif domain in the interval 16–87 (EDVVMVNVLS…EKGYIDLSKR (72 aa)). Ser-51 carries the phosphoserine modification. The interval 293-341 (AENAQVAGDDDEEDGADQEGMQFDPEKEFNHKGSGAGRANEEDEEEEED) is disordered. The segment covering 300-309 (GDDDEEDGAD) has biased composition (acidic residues).

Belongs to the eIF-2-alpha family. In terms of assembly, eukaryotic translation initiation factor 2 eIF2 is a heterotrimeric complex composed of an alpha, a beta and a gamma subunit. Phosphorylation of eIF-2-alpha impairs the recycling of eIF-2 between successive rounds of initiation and thus leads to inhibition of translation.

It localises to the cytoplasm. The protein resides in the cytosol. EIF-2 functions in the early steps of protein synthesis by forming a ternary complex with GTP and initiator tRNA. This pre-initiation complex mediates ribosomal recognition of a start codon during the scanning process of the leader region. The polypeptide is Eukaryotic translation initiation factor 2 subunit 1 (Drosophila melanogaster (Fruit fly)).